Reading from the N-terminus, the 424-residue chain is Glucan endo-1,3-alpha-glucosidase agn1 (424 aa).

An N-terminal signal peptide occupies residues Met1–Ala20.

This sequence belongs to the glycosyl hydrolase 71 family. As to quaternary structure, monomer. In terms of processing, not glycosylated.

It is found in the secreted. It localises to the cell wall. It carries out the reaction Endohydrolysis of (1-&gt;3)-alpha-D-glucosidic linkages in isolichenin, pseudonigeran and nigeran.. Its function is as follows. Has a role in cell separation where it is required for the degradation of the cell wall material surrounding the septum (the septum edging) which must be hydrolyzed before full separation of the daughter cells can occur. Hydrolyzes 1,3-alpha-glucan predominantly into pentasaccharides. The polypeptide is Glucan endo-1,3-alpha-glucosidase agn1 (agn1) (Schizosaccharomyces pombe (strain 972 / ATCC 24843) (Fission yeast)).